The chain runs to 170 residues: Disulfide bond formation protein B (170 aa).

At 1–14 the chain is on the cytoplasmic side; that stretch reads MNDSTLALRRERRL. Residues 15-31 traverse the membrane as a helical segment; the sequence is LMLLGWVCIALLAGALY. Residues 32–49 lie on the Periplasmic side of the membrane; the sequence is LQYVKNEDPCPLCIIQRY. A disulfide bridge connects residues Cys-41 and Cys-44. The helical transmembrane segment at 50–64 threads the bilayer; it reads FFAAIGIFAFLAAGI. The Cytoplasmic segment spans residues 65 to 71; the sequence is RNWRVIW. Residues 72–89 form a helical membrane-spanning segment; the sequence is VFELLIAIAAAGGVGTAA. At 90–144 the chain is on the periplasmic side; the sequence is RHLSIQMNPGFSCGFDTLQPIVDSLPPAQWFPGMFKVAGLCETVYPPIFGILLPG. Cys-102 and Cys-130 are joined by a disulfide. Residues 145 to 163 traverse the membrane as a helical segment; that stretch reads WALIGFAVILVAVASSLWR. The Cytoplasmic portion of the chain corresponds to 164–170; the sequence is HRRKLAG.

The protein belongs to the DsbB family.

The protein resides in the cell inner membrane. Its function is as follows. Required for disulfide bond formation in some periplasmic proteins. Acts by oxidizing the DsbA protein. This chain is Disulfide bond formation protein B, found in Burkholderia ambifaria (strain ATCC BAA-244 / DSM 16087 / CCUG 44356 / LMG 19182 / AMMD) (Burkholderia cepacia (strain AMMD)).